Here is a 441-residue protein sequence, read N- to C-terminus: Homogentisate 1,2-dioxygenase (441 aa).

The Proton acceptor role is filled by histidine 287. Fe cation contacts are provided by histidine 330 and glutamate 336. Homogentisate is bound by residues tyrosine 345 and histidine 366. Position 366 (histidine 366) interacts with Fe cation.

Belongs to the homogentisate dioxygenase family. Hexamer; dimer of trimers. The cofactor is Fe cation.

The catalysed reaction is homogentisate + O2 = 4-maleylacetoacetate + H(+). Its pathway is amino-acid degradation; L-phenylalanine degradation; acetoacetate and fumarate from L-phenylalanine: step 4/6. In terms of biological role, involved in the catabolism of homogentisate (2,5-dihydroxyphenylacetate or 2,5-OH-PhAc), a central intermediate in the degradation of phenylalanine and tyrosine. Catalyzes the oxidative ring cleavage of the aromatic ring of homogentisate to yield maleylacetoacetate. This Xanthomonas oryzae pv. oryzae (strain KACC10331 / KXO85) protein is Homogentisate 1,2-dioxygenase.